Consider the following 280-residue polypeptide: Putative pyruvate, phosphate dikinase regulatory protein 1 (280 aa).

Position 152-159 (152-159 (GVSRTSKT)) interacts with ADP.

The protein belongs to the pyruvate, phosphate/water dikinase regulatory protein family. PDRP subfamily.

The catalysed reaction is N(tele)-phospho-L-histidyl/L-threonyl-[pyruvate, phosphate dikinase] + ADP = N(tele)-phospho-L-histidyl/O-phospho-L-threonyl-[pyruvate, phosphate dikinase] + AMP + H(+). It catalyses the reaction N(tele)-phospho-L-histidyl/O-phospho-L-threonyl-[pyruvate, phosphate dikinase] + phosphate + H(+) = N(tele)-phospho-L-histidyl/L-threonyl-[pyruvate, phosphate dikinase] + diphosphate. In terms of biological role, bifunctional serine/threonine kinase and phosphorylase involved in the regulation of the pyruvate, phosphate dikinase (PPDK) by catalyzing its phosphorylation/dephosphorylation. The sequence is that of Putative pyruvate, phosphate dikinase regulatory protein 1 from Latilactobacillus sakei subsp. sakei (strain 23K) (Lactobacillus sakei subsp. sakei).